Here is a 480-residue protein sequence, read N- to C-terminus: Uronate isomerase (480 aa).

It belongs to the metallo-dependent hydrolases superfamily. Uronate isomerase family.

The catalysed reaction is D-glucuronate = D-fructuronate. It carries out the reaction aldehydo-D-galacturonate = keto-D-tagaturonate. It functions in the pathway carbohydrate metabolism; pentose and glucuronate interconversion. The protein is Uronate isomerase of Phenylobacterium zucineum (strain HLK1).